A 311-amino-acid chain; its full sequence is Aspartate carbamoyltransferase catalytic subunit (311 aa).

Positions 55 and 56 each coordinate carbamoyl phosphate. Residue Lys85 coordinates L-aspartate. The carbamoyl phosphate site is built by Arg106, His135, and Gln138. Positions 168 and 230 each coordinate L-aspartate. Positions 268 and 269 each coordinate carbamoyl phosphate.

The protein belongs to the aspartate/ornithine carbamoyltransferase superfamily. ATCase family. In terms of assembly, heterododecamer (2C3:3R2) of six catalytic PyrB chains organized as two trimers (C3), and six regulatory PyrI chains organized as three dimers (R2).

The catalysed reaction is carbamoyl phosphate + L-aspartate = N-carbamoyl-L-aspartate + phosphate + H(+). It participates in pyrimidine metabolism; UMP biosynthesis via de novo pathway; (S)-dihydroorotate from bicarbonate: step 2/3. Catalyzes the condensation of carbamoyl phosphate and aspartate to form carbamoyl aspartate and inorganic phosphate, the committed step in the de novo pyrimidine nucleotide biosynthesis pathway. This chain is Aspartate carbamoyltransferase catalytic subunit, found in Citrobacter koseri (strain ATCC BAA-895 / CDC 4225-83 / SGSC4696).